A 511-amino-acid chain; its full sequence is GMP synthase [glutamine-hydrolyzing] (511 aa).

Residues 5 to 195 (LILVLDFGGQ…LYKICGCSGD (191 aa)) enclose the Glutamine amidotransferase type-1 domain. Cysteine 82 serves as the catalytic Nucleophile. Active-site residues include histidine 169 and glutamate 171. In terms of domain architecture, GMPS ATP-PPase spans 196–386 (WKMASFIEHS…LGIPEDIVMR (191 aa)). 223 to 229 (SGGVDSS) contacts ATP.

Homodimer.

The enzyme catalyses XMP + L-glutamine + ATP + H2O = GMP + L-glutamate + AMP + diphosphate + 2 H(+). The protein operates within purine metabolism; GMP biosynthesis; GMP from XMP (L-Gln route): step 1/1. Its function is as follows. Catalyzes the synthesis of GMP from XMP. The polypeptide is GMP synthase [glutamine-hydrolyzing] (Acetivibrio thermocellus (strain ATCC 27405 / DSM 1237 / JCM 9322 / NBRC 103400 / NCIMB 10682 / NRRL B-4536 / VPI 7372) (Clostridium thermocellum)).